We begin with the raw amino-acid sequence, 176 residues long: Putative phosphohydrolase YueE (176 aa).

The 117-residue stretch at 23-139 (GVAHAIACAY…VKKADELDEE (117 aa)) folds into the HD domain.

This is Putative phosphohydrolase YueE (yueE) from Bacillus subtilis (strain 168).